A 318-amino-acid polypeptide reads, in one-letter code: Malonyl-S-ACP:biotin-protein carboxyltransferase MADC (318 aa).

Residues Ala-2 to Glu-257 enclose the CoA carboxyltransferase N-terminal domain.

Its subcellular location is the cytoplasm. The enzyme catalyses N(6)-biotinyl-L-lysyl-[protein] + malonyl-[ACP] = N(6)-carboxybiotinyl-L-lysyl-[protein] + acetyl-[ACP]. Its function is as follows. Gamma subunit of the biotin-dependent malonate decarboxylase multienzyme complex (EC 7.2.4.4). The two subunits MADC and MADD are required for the transfer of the malonate carboxy group from the acyl-carrier protein (ACP) to the prosthetic group of the biotin carrier MADF. Required for the regeneration of ACP. The sequence is that of Malonyl-S-ACP:biotin-protein carboxyltransferase MADC (madC) from Malonomonas rubra.